The sequence spans 630 residues: Ribonucleoside-diphosphate reductase large subunit (630 aa).

Substrate-binding positions include Ser67, 82-83 (AC), Gly111, 317-321 (NLCSE), and 459-463 (PNATS). Cys83 and Cys334 are joined by a disulfide. Asn317 functions as the Proton acceptor in the catalytic mechanism. Cys319 serves as the catalytic Cysteine radical intermediate. Glu321 functions as the Proton acceptor in the catalytic mechanism.

This sequence belongs to the ribonucleoside diphosphate reductase large chain family. As to quaternary structure, heterotetramer composed of a homodimer of the large subunit (R1) and a homodimer of the small subunit (R2). Larger multisubunit protein complex are also active, composed of (R1)n(R2)n.

The catalysed reaction is a 2'-deoxyribonucleoside 5'-diphosphate + [thioredoxin]-disulfide + H2O = a ribonucleoside 5'-diphosphate + [thioredoxin]-dithiol. Its activity is regulated as follows. Under complex allosteric control mediated by deoxynucleoside triphosphates and ATP binding. The type of nucleotide bound at the specificity site determines substrate preference. It seems probable that ATP makes the enzyme reduce CDP and UDP, dGTP favors ADP reduction and dTTP favors GDP reduction. Ribonucleoside-diphosphate reductase holoenzyme provides the precursors necessary for viral DNA synthesis. Allows virus growth in non-dividing cells. Catalyzes the biosynthesis of deoxyribonucleotides from the corresponding ribonucleotides. This Aedes vexans (Inland floodwater mosquito) protein is Ribonucleoside-diphosphate reductase large subunit.